A 47-amino-acid chain; its full sequence is Light-harvesting protein B800/850/890 alpha-2 chain (47 aa).

At 1–12 (MWRMWKILDYRR) the chain is on the cytoplasmic side. Residues 13-33 (TVVLAHVGMAVLALLIHFILL) traverse the membrane as a helical segment. His-29 is an a bacteriochlorophyll binding site. Residues 34 to 47 (STESFNWLEGNPYG) lie on the Periplasmic side of the membrane.

It belongs to the antenna complex alpha subunit family. The core complex is formed by different alpha and beta chains, binding bacteriochlorophyll molecules, and arranged most probably in tetrameric structures disposed around the reaction center. The non-pigmented gamma chains may constitute additional components.

Its subcellular location is the cell inner membrane. Its function is as follows. Antenna complexes are light-harvesting systems, which transfer the excitation energy to the reaction centers. The sequence is that of Light-harvesting protein B800/850/890 alpha-2 chain from Halorhodospira halophila (strain DSM 244 / SL1) (Ectothiorhodospira halophila (strain DSM 244 / SL1)).